We begin with the raw amino-acid sequence, 283 residues long: NAD kinase (283 aa).

The active-site Proton acceptor is the aspartate 68. NAD(+) is bound by residues 68 to 69, 142 to 143, arginine 153, aspartate 172, 183 to 188, and glutamine 242; these read DG, ND, and TAYSLS.

The protein belongs to the NAD kinase family. The cofactor is a divalent metal cation.

The protein localises to the cytoplasm. The catalysed reaction is NAD(+) + ATP = ADP + NADP(+) + H(+). Its function is as follows. Involved in the regulation of the intracellular balance of NAD and NADP, and is a key enzyme in the biosynthesis of NADP. Catalyzes specifically the phosphorylation on 2'-hydroxyl of the adenosine moiety of NAD to yield NADP. The sequence is that of NAD kinase from Thermoanaerobacter pseudethanolicus (strain ATCC 33223 / 39E) (Clostridium thermohydrosulfuricum).